The primary structure comprises 191 residues: UPF0312 protein Shew185_3055 (191 aa).

A signal peptide spans 1–22; the sequence is MKKQLLSALIGASLLAPMAASA.

Belongs to the UPF0312 family. Type 1 subfamily.

The protein resides in the periplasm. This is UPF0312 protein Shew185_3055 from Shewanella baltica (strain OS185).